The sequence spans 112 residues: SRA stem-loop-interacting RNA-binding protein, mitochondrial (112 aa).

The residue at position 15 (Ser15) is a Phosphoserine. In terms of domain architecture, RRM spans 19 to 98 (PIAFVRKIPW…IHVQAQRAKA (80 aa)). At Thr104 the chain carries Phosphothreonine. A Phosphoserine modification is found at Ser105.

The protein localises to the mitochondrion. It localises to the nucleus. In terms of biological role, RNA-binding protein that acts as a nuclear receptor corepressor. Probably acts by binding the SRA RNA, and repressing the SRA-mediated nuclear receptor coactivation. Binds the STR7 loop of SRA RNA. Also able to repress glucocorticoid (GR), androgen (AR), thyroid (TR) and VDR-mediated transactivation. This is SRA stem-loop-interacting RNA-binding protein, mitochondrial (Slirp) from Mus musculus (Mouse).